The following is an 87-amino-acid chain: Defensin-A (87 aa).

The first 19 residues, 1–19, serve as a signal peptide directing secretion; it reads MKFYLVLAFLTLCAVAVTA. Residues 20-44 constitute a propeptide that is removed on maturation; it reads LPAGDETRIDLETLEEDLRLVDGAQ. Cystine bridges form between cysteine 57–cysteine 78, cysteine 64–cysteine 83, and cysteine 68–cysteine 85.

Hemolymph and fat body.

The protein localises to the secreted. Antibacterial peptide mostly active against Gram-positive and Gram negative bacteria. This chain is Defensin-A, found in Glossina morsitans morsitans (Savannah tsetse fly).